The sequence spans 425 residues: MKDKPLKLTVEKLVYGGYGFSRLNGKAVFVRFASPKELVEAKVVKEKKDYTEAVVTKVLISSPARRKAPCPYYGECGGCQIQHLNYEEQLRSKKDILLESLERIGKIKEVPYEGEIPSKKEFNYRVRVQFKIQENRVGFYRWDVKEVVDVEECLLAHERINELIPHIREVLKVIKDLQEVHVNYSPTRDEATLKFVTITHTDEKLLQNILENVLPEWVVGIGDYGKVGNSLVKRYKVGREHIFMDVGKWQYRVSNDSFFQVNYTLWEDFLKEVLDFSESYKKGLDLHCGVGFFTIPLSEQGNFIEGADANPSAIKDAEYNAKINNRDNVIFEEATAFKHLKRRIGEVINLVVVDPPRSGLLREERDLLLKNKPDKIVYISCNPTTFARDLKILTKGGYELKRLKLIDNFPQTYHIESIALLEVKD.

The TRAM domain maps to 1 to 57 (MKDKPLKLTVEKLVYGGYGFSRLNGKAVFVRFASPKELVEAKVVKEKKDYTEAVVTK). 4 residues coordinate [4Fe-4S] cluster: Cys-70, Cys-76, Cys-79, and Cys-153. S-adenosyl-L-methionine-binding residues include Gln-260, Asp-308, and Asp-354. The Nucleophile role is filled by Cys-381.

The protein belongs to the class I-like SAM-binding methyltransferase superfamily. RNA M5U methyltransferase family.

This is an uncharacterized protein from Aquifex aeolicus (strain VF5).